A 215-amino-acid chain; its full sequence is UPF0441 protein SG0265 (215 aa).

This sequence belongs to the UPF0441 family.

This Sodalis glossinidius (strain morsitans) protein is UPF0441 protein SG0265.